Consider the following 380-residue polypeptide: Crotonobetainyl-CoA reductase (380 aa).

This sequence belongs to the acyl-CoA dehydrogenase family. Homotetramer. The cofactor is FAD.

Its subcellular location is the cytoplasm. It carries out the reaction 4-(trimethylamino)butanoyl-CoA + oxidized [electron-transfer flavoprotein] + H(+) = crotonobetainyl-CoA + reduced [electron-transfer flavoprotein]. It participates in amine and polyamine metabolism; carnitine metabolism. Its function is as follows. Catalyzes the reduction of crotonobetainyl-CoA to gamma-butyrobetainyl-CoA. The chain is Crotonobetainyl-CoA reductase from Escherichia coli O6:K15:H31 (strain 536 / UPEC).